A 198-amino-acid polypeptide reads, in one-letter code: Probable molybdenum cofactor guanylyltransferase (198 aa).

GTP is bound by residues 9–11 (LAG), lysine 22, aspartate 66, and aspartate 95. A Mg(2+)-binding site is contributed by aspartate 95.

Belongs to the MobA family. Requires Mg(2+) as cofactor.

It is found in the cytoplasm. It catalyses the reaction Mo-molybdopterin + GTP + H(+) = Mo-molybdopterin guanine dinucleotide + diphosphate. In terms of biological role, transfers a GMP moiety from GTP to Mo-molybdopterin (Mo-MPT) cofactor (Moco or molybdenum cofactor) to form Mo-molybdopterin guanine dinucleotide (Mo-MGD) cofactor. The polypeptide is Probable molybdenum cofactor guanylyltransferase (Clostridium perfringens (strain SM101 / Type A)).